The following is a 72-amino-acid chain: NAD(P)H-quinone oxidoreductase subunit O (72 aa).

It belongs to the complex I NdhO subunit family. As to quaternary structure, NDH-1 can be composed of about 15 different subunits; different subcomplexes with different compositions have been identified which probably have different functions.

The protein resides in the cellular thylakoid membrane. It catalyses the reaction a plastoquinone + NADH + (n+1) H(+)(in) = a plastoquinol + NAD(+) + n H(+)(out). The catalysed reaction is a plastoquinone + NADPH + (n+1) H(+)(in) = a plastoquinol + NADP(+) + n H(+)(out). In terms of biological role, NDH-1 shuttles electrons from an unknown electron donor, via FMN and iron-sulfur (Fe-S) centers, to quinones in the respiratory and/or the photosynthetic chain. The immediate electron acceptor for the enzyme in this species is believed to be plastoquinone. Couples the redox reaction to proton translocation, and thus conserves the redox energy in a proton gradient. Cyanobacterial NDH-1 also plays a role in inorganic carbon-concentration. This is NAD(P)H-quinone oxidoreductase subunit O from Gloeothece citriformis (strain PCC 7424) (Cyanothece sp. (strain PCC 7424)).